A 236-amino-acid polypeptide reads, in one-letter code: Small ribosomal subunit protein uS2c (236 aa).

It belongs to the universal ribosomal protein uS2 family.

It localises to the plastid. It is found in the chloroplast. The protein is Small ribosomal subunit protein uS2c (rps2) of Lepidium virginicum (Virginia pepperweed).